The chain runs to 382 residues: V-type proton ATPase subunit C 1 (382 aa).

T2 carries the post-translational modification N-acetylthreonine.

It belongs to the V-ATPase C subunit family. As to quaternary structure, V-ATPase is a heteromultimeric enzyme made up of two complexes: the ATP-hydrolytic V1 complex and the proton translocation V0 complex. The V1 complex consists of three catalytic AB heterodimers that form a heterohexamer, three peripheral stalks each consisting of EG heterodimers, one central rotor including subunits D and F, and the regulatory subunits C and H. The proton translocation complex V0 consists of the proton transport subunit a, a ring of proteolipid subunits c9c'', rotary subunit d, subunits e and f, and the accessory subunits ATP6AP1/Ac45 and ATP6AP2/PRR. As to expression, expressed in brain (at protein level).

Its subcellular location is the cytoplasmic vesicle. It localises to the secretory vesicle. It is found in the synaptic vesicle membrane. The protein localises to the clathrin-coated vesicle membrane. Subunit of the V1 complex of vacuolar(H+)-ATPase (V-ATPase), a multisubunit enzyme composed of a peripheral complex (V1) that hydrolyzes ATP and a membrane integral complex (V0) that translocates protons. V-ATPase is responsible for acidifying and maintaining the pH of intracellular compartments and in some cell types, is targeted to the plasma membrane, where it is responsible for acidifying the extracellular environment. Subunit C is necessary for the assembly of the catalytic sector of the enzyme and is likely to have a specific function in its catalytic activity. In Rattus norvegicus (Rat), this protein is V-type proton ATPase subunit C 1 (Atp6v1c1).